The following is a 229-amino-acid chain: MSVSLSRLERQLGYSFKDQELMLLALTHRSFAGRNNERLEFLGDAILNFVAGEALFERFPQAREGQLSRLRARLVKGETLAVLARGFDLGEYLRLGSGELKSGGFRRESILADALEALIGAIYLDAGMETARDRVLSWLASEFESLTLVDTNKDPKTRLQEFLQSRACELPRYEVVDIQGEPHCRTFFVECEVTLLNEKSRGQGVSRRIAEQVAAAAALIALGVENGHD.

The region spanning 5 to 127 is the RNase III domain; the sequence is LSRLERQLGY…LIGAIYLDAG (123 aa). E40 is a Mg(2+) binding site. D44 is an active-site residue. 2 residues coordinate Mg(2+): D113 and E116. Residue E116 is part of the active site. The DRBM domain maps to 154–224; it reads DPKTRLQEFL…AAAALIALGV (71 aa).

The protein belongs to the ribonuclease III family. In terms of assembly, homodimer. It depends on Mg(2+) as a cofactor.

It is found in the cytoplasm. The catalysed reaction is Endonucleolytic cleavage to 5'-phosphomonoester.. Functionally, digests double-stranded RNA. Involved in the processing of primary rRNA transcript to yield the immediate precursors to the large and small rRNAs (23S and 16S). Processes some mRNAs, and tRNAs when they are encoded in the rRNA operon. Processes pre-crRNA and tracrRNA of type II CRISPR loci if present in the organism. This chain is Ribonuclease 3, found in Pseudomonas fluorescens (strain ATCC BAA-477 / NRRL B-23932 / Pf-5).